The following is a 442-amino-acid chain: MSSSSRNLSQENPIPRPNLAKTRTSLRDVGNRRAPLGDITNQKNGSRNPSPSSTLVNCSNKIGQSKKAPKPALSRNWNLGILDSGLPPKPNAKSNIIVPYEDTELLQSDDSLLCSSPALSLDASPTQSDPSISTHDSLTNHVVDYMVESTTDDGNDDDDDEIVNIDSDLMDPQLCASFACDIYEHLRVSEVNKRPALDYMERTQSSINASMRSILIDWLVEVAEEYRLSPETLYLAVNYVDRYLTGNAINKQNLQLLGVTCMMIAAKYEEVCVPQVEDFCYITDNTYLRNELLEMESSVLNYLKFELTTPTAKCFLRRFLRAAQGRKEVPSLLSECLACYLTELSLLDYAMLRYAPSLVAASAVFLAQYTLHPSRKPWNATLEHYTSYRAKHMEACVKNLLQLCNEKLSSDVVAIRKKYSQHKYKFAAKKLCPTSLPQELFL.

Polar residues-rich tracts occupy residues 1-12 (MSSSSRNLSQEN) and 39-63 (ITNQ…NKIG). The segment at 1 to 72 (MSSSSRNLSQ…GQSKKAPKPA (72 aa)) is disordered.

Belongs to the cyclin family. Cyclin AB subfamily. Interacts with CDC20-1, CDC20-2, FZR2/CCS52A1 and FZR1/CCS52A2. Expressed in roots, stems and flowers.

Its subcellular location is the cytoplasm. The protein resides in the nucleus. Its function is as follows. Involved in the regulation of male meiosis progression. In Arabidopsis thaliana (Mouse-ear cress), this protein is Cyclin-A1-2 (CYCA1-2).